The sequence spans 328 residues: Glycerophosphodiester phosphodiesterase GDPD4 (328 aa).

The helical transmembrane segment at 35 to 55 (TILFAVIFLAIFPPLYFHFKL) threads the bilayer. The GP-PDE domain occupies 73–312 (PLVCAHGGDS…SDPSMFQGLM (240 aa)).

This sequence belongs to the glycerophosphoryl diester phosphodiesterase family. Expressed in rosette and cauline leaves.

Its subcellular location is the membrane. It carries out the reaction a sn-glycero-3-phosphodiester + H2O = an alcohol + sn-glycerol 3-phosphate + H(+). In Arabidopsis thaliana (Mouse-ear cress), this protein is Glycerophosphodiester phosphodiesterase GDPD4.